A 488-amino-acid polypeptide reads, in one-letter code: Ribulose bisphosphate carboxylase large chain (488 aa).

Substrate is bound by residues asparagine 127 and threonine 177. Lysine 179 serves as the catalytic Proton acceptor. Position 181 (lysine 181) interacts with substrate. 3 residues coordinate Mg(2+): lysine 205, aspartate 207, and glutamate 208. Residue lysine 205 is modified to N6-carboxylysine. Residue histidine 297 is the Proton acceptor of the active site. Substrate-binding residues include arginine 298, histidine 330, and serine 382.

This sequence belongs to the RuBisCO large chain family. Type I subfamily. Heterohexadecamer of 8 large chains and 8 small chains. The cofactor is Mg(2+).

Its subcellular location is the plastid. The protein resides in the chloroplast. It catalyses the reaction 2 (2R)-3-phosphoglycerate + 2 H(+) = D-ribulose 1,5-bisphosphate + CO2 + H2O. The catalysed reaction is D-ribulose 1,5-bisphosphate + O2 = 2-phosphoglycolate + (2R)-3-phosphoglycerate + 2 H(+). RuBisCO catalyzes two reactions: the carboxylation of D-ribulose 1,5-bisphosphate, the primary event in carbon dioxide fixation, as well as the oxidative fragmentation of the pentose substrate in the photorespiration process. Both reactions occur simultaneously and in competition at the same active site. The sequence is that of Ribulose bisphosphate carboxylase large chain from Pyropia yezoensis (Susabi-nori).